The primary structure comprises 213 residues: N-(5'-phosphoribosyl)anthranilate isomerase (213 aa).

This sequence belongs to the TrpF family.

It catalyses the reaction N-(5-phospho-beta-D-ribosyl)anthranilate = 1-(2-carboxyphenylamino)-1-deoxy-D-ribulose 5-phosphate. It participates in amino-acid biosynthesis; L-tryptophan biosynthesis; L-tryptophan from chorismate: step 3/5. In Methylibium petroleiphilum (strain ATCC BAA-1232 / LMG 22953 / PM1), this protein is N-(5'-phosphoribosyl)anthranilate isomerase.